Here is a 211-residue protein sequence, read N- to C-terminus: MIFVTGTDTGIGKTYVSAILGKILKEKGINVGYMKPVESGGIEDTAYVRSELGLNNSFEELNPVNLKKPLSPNISAKIEEKEIDILKIKAAFEKLKEEYEFLIVEGAGGVAVPIKKDFLIADLIKYLDLTCIVVSRPNLGTINHTILTVDFLRKKGITVLGVIINCITDVSKVPYYEETFKSIEEFGNVEIIGIVNDKKDFYIDLKKLNLP.

ATP is bound at residue 10–15; sequence GIGKTY. Threonine 14 is a Mg(2+) binding site. The active site involves lysine 35. A substrate-binding site is contributed by serine 39. Residues aspartate 44, 105-108, and 165-166 contribute to the ATP site; these read EGAG and NC. Mg(2+) is bound by residues aspartate 44 and glutamate 105.

This sequence belongs to the dethiobiotin synthetase family. In terms of assembly, homodimer. The cofactor is Mg(2+).

Its subcellular location is the cytoplasm. The catalysed reaction is (7R,8S)-7,8-diammoniononanoate + CO2 + ATP = (4R,5S)-dethiobiotin + ADP + phosphate + 3 H(+). It functions in the pathway cofactor biosynthesis; biotin biosynthesis; biotin from 7,8-diaminononanoate: step 1/2. Catalyzes a mechanistically unusual reaction, the ATP-dependent insertion of CO2 between the N7 and N8 nitrogen atoms of 7,8-diaminopelargonic acid (DAPA, also called 7,8-diammoniononanoate) to form a ureido ring. The chain is ATP-dependent dethiobiotin synthetase BioD from Methanococcus vannielii (strain ATCC 35089 / DSM 1224 / JCM 13029 / OCM 148 / SB).